Reading from the N-terminus, the 277-residue chain is Exosome complex component Rrp42 (277 aa).

It belongs to the RNase PH family. Rrp42 subfamily. In terms of assembly, component of the archaeal exosome complex. Forms a hexameric ring-like arrangement composed of 3 Rrp41-Rrp42 heterodimers. The hexameric ring associates with a trimer of Rrp4 and/or Csl4 subunits.

The protein localises to the cytoplasm. Its function is as follows. Non-catalytic component of the exosome, which is a complex involved in RNA degradation. Contributes to the structuring of the Rrp41 active site. This is Exosome complex component Rrp42 from Pyrococcus furiosus (strain ATCC 43587 / DSM 3638 / JCM 8422 / Vc1).